The chain runs to 495 residues: Flagellin (495 aa).

It belongs to the bacterial flagellin family.

It is found in the secreted. The protein localises to the bacterial flagellum. In terms of biological role, flagellin is the subunit protein which polymerizes to form the filaments of bacterial flagella. This chain is Flagellin (fliC), found in Salmonella typhimurium (strain LT2 / SGSC1412 / ATCC 700720).